Consider the following 428-residue polypeptide: Ribulose bisphosphate carboxylase (428 aa).

Lys151 serves as the catalytic Proton acceptor. Lys153 contacts substrate. Mg(2+) is bound by residues Lys177, Asp179, and Glu180. Lys177 is modified (N6-carboxylysine). Residue His270 is the Proton acceptor of the active site. Residues Arg271, His303, 354–356 (SGG), and 376–379 (QFGG) contribute to the substrate site.

Belongs to the RuBisCO large chain family. Type III subfamily. In terms of assembly, homodimer. In contrast to form I RuBisCO, the form III RuBisCO is composed solely of large subunits. It depends on Mg(2+) as a cofactor.

It catalyses the reaction 2 (2R)-3-phosphoglycerate + 2 H(+) = D-ribulose 1,5-bisphosphate + CO2 + H2O. It carries out the reaction D-ribulose 1,5-bisphosphate + O2 = 2-phosphoglycolate + (2R)-3-phosphoglycerate + 2 H(+). Reversibly inhibited by O(2). Functionally, catalyzes the addition of molecular CO(2) and H(2)O to ribulose 1,5-bisphosphate (RuBP), generating two molecules of 3-phosphoglycerate (3-PGA). Functions in an archaeal AMP degradation pathway, together with AMP phosphorylase and R15P isomerase. This chain is Ribulose bisphosphate carboxylase, found in Methanosarcina acetivorans (strain ATCC 35395 / DSM 2834 / JCM 12185 / C2A).